The primary structure comprises 865 residues: MIKAIIGKIIGTRNDRWIKQYKKKVLAINALEPTYEKMSDVELQNAFEELKKRVRSVEKDLQEKTLLEVLPESFAITREASKRILKMRHFDVQLIGGMVLNDGKIAEMKTGEGKTLVATLAVALNAMKGESVYVVTVNDYLAHRDSKEMEPLYQFLGYSVGTITASVRDDDERLEIYSKDIVYGTNNEFGFDYLRDNMKYSLEHKVQKSHAFAIVDEVDSILIDEARTPLIISGPVDRRMENYNKADEVAKSMQVEVDFTIDEKNRAILITEEGIKKAENLFGVDNLYKIENAALSHHLDQALKANYLFFIDKDYIVANNEVVIVDEFTGRLSEGRRFSEGLHQALEAKEGVSIKEESQTLADITFQNYFRMFSKLSGMTGTAQTEATEFLEIYNLEVVSIPTNLAIKRKDLNDLIYKSEKEKFDAVILKIKELHDKGQPVLVGTASIEKSETLHALLKKERIPHTVLNAKQHTKEAEIIKDAGLKGAVTIATNMAGRGVDIKLTDEVKELGGLYIIGTERHESRRIDNQLRGRSGRQGDPGVSQFYLSLEDNLLRIFGSDRIKGVMEKLGLKDGEHIESKLVTRAVENAQKKVENLHFESRKHLLEYDDVANEQRKSVYKFRDELLDINYDISAKIAENREYALNQIFSKLKAFDHQNLSEEELLGLKNILKEDFNASVELEDLEKASPIEKFVAEKLKSDYENKMKALDSEQRSRIERIVYLQILDNAWREHLYTMDNLKTGINLRGYNQKDPLVEYKKESYNLFLELIGDIKIEAIQTFSKIQFENEQDSSDAERYLDNFSEEREHESVTYRHEEALDEDLNVAVKAFSKTPKRNEPCPCGSGKKYKDCCAKSGPKKGLFAK.

Residues Gln-93, 111-115, and Asp-501 each bind ATP; that span reads GEGKT. Zn(2+) contacts are provided by Cys-841, Cys-843, Cys-852, and Cys-853.

This sequence belongs to the SecA family. In terms of assembly, monomer and homodimer. Part of the essential Sec protein translocation apparatus which comprises SecA, SecYEG and auxiliary proteins SecDF-YajC and YidC. Zn(2+) serves as cofactor.

The protein localises to the cell inner membrane. Its subcellular location is the cytoplasm. It catalyses the reaction ATP + H2O + cellular proteinSide 1 = ADP + phosphate + cellular proteinSide 2.. Part of the Sec protein translocase complex. Interacts with the SecYEG preprotein conducting channel. Has a central role in coupling the hydrolysis of ATP to the transfer of proteins into and across the cell membrane, serving as an ATP-driven molecular motor driving the stepwise translocation of polypeptide chains across the membrane. The polypeptide is Protein translocase subunit SecA (Helicobacter pylori (strain J99 / ATCC 700824) (Campylobacter pylori J99)).